The sequence spans 207 residues: Ribonuclease HII (207 aa).

Residues 18–207 form the RNase H type-2 domain; that stretch reads TYLSGSDEAG…PIKKISKETS (190 aa). 3 residues coordinate a divalent metal cation: Asp24, Glu25, and Asp116.

This sequence belongs to the RNase HII family. Requires Mn(2+) as cofactor. Mg(2+) is required as a cofactor.

The protein resides in the cytoplasm. The catalysed reaction is Endonucleolytic cleavage to 5'-phosphomonoester.. Endonuclease that specifically degrades the RNA of RNA-DNA hybrids. This is Ribonuclease HII from Mycoplasma capricolum subsp. capricolum (strain California kid / ATCC 27343 / NCTC 10154).